Here is a 144-residue protein sequence, read N- to C-terminus: MSNAYEEYMRQMVIPMRQELVRSGFEELTTEEAVTEFIENTTGTTLVVVNSVCGCAAGLARPSAGQAVVRAEKQPDHLVTVFAGQDKDATAKMREYFGEIPPSSPSMALLKGKEVVHFIHRHEIEGATMDEIITNLEQAFEKNC.

This sequence belongs to the bacilliredoxin family.

This is Bacilliredoxin BCE_2233 from Bacillus cereus (strain ATCC 10987 / NRS 248).